A 401-amino-acid polypeptide reads, in one-letter code: Elongation factor Tu (401 aa).

Positions 10 to 211 constitute a tr-type G domain; sequence KPHLNVGTIG…ALDTFVPNPK (202 aa). Positions 19-26 are G1; it reads GHVDHGKT. Position 19 to 26 (19 to 26) interacts with GTP; sequence GHVDHGKT. Thr26 contacts Mg(2+). The G2 stretch occupies residues 62–66; sequence GITIA. Residues 83 to 86 are G3; the sequence is DCPG. Residues 83–87 and 138–141 each bind GTP; these read DCPGH and NKAD. A G4 region spans residues 138-141; the sequence is NKAD. Residues 179–181 form a G5 region; the sequence is SAV.

This sequence belongs to the TRAFAC class translation factor GTPase superfamily. Classic translation factor GTPase family. EF-Tu/EF-1A subfamily. In terms of assembly, monomer.

Its subcellular location is the cytoplasm. The enzyme catalyses GTP + H2O = GDP + phosphate + H(+). GTP hydrolase that promotes the GTP-dependent binding of aminoacyl-tRNA to the A-site of ribosomes during protein biosynthesis. The sequence is that of Elongation factor Tu from Leptospira interrogans serogroup Icterohaemorrhagiae serovar copenhageni (strain Fiocruz L1-130).